The chain runs to 117 residues: Swarming motility protein SwrAA (117 aa).

It is found in the cytoplasm. In terms of biological role, required for swarm cell differentiation. Plays a crucial role in regulating the degree of cell flagellation. The protein is Swarming motility protein SwrAA (swrAA) of Bacillus subtilis (strain 168).